A 514-amino-acid chain; its full sequence is Prolyl 3,4-dihydroxylase OGFOD1 (514 aa).

The Fe2OG dioxygenase domain maps to 114-221; the sequence is GAVDCSCNIY…RVSISGWFHT (108 aa). Residues His-132 and Asp-134 each contribute to the Fe cation site. Residue Tyr-146 coordinates 2-oxoglutarate. His-200 contacts Fe cation. Arg-212 is a binding site for 2-oxoglutarate.

The protein belongs to the TPA1 family. Monomer and homodimer. Requires Fe(2+) as cofactor. L-ascorbate is required as a cofactor.

The catalysed reaction is [ribosomal protein uS12]-L-proline + 2-oxoglutarate + O2 = [ribosomal protein uS12]-(3S)-3-hydroxy-L-proline + succinate + CO2. The enzyme catalyses [ribosomal protein uS12]-(3S)-3-hydroxy-L-proline + 2-oxoglutarate + O2 = [ribosomal protein uS12]-(3S)-3,4-dihydroxy-L-proline + succinate + CO2. Its function is as follows. Prolyl 3,4-dihydroxylase that catalyzes 3,4-dihydroxylation of 'Pro-61' of small ribosomal subunit uS12 (RPS23), thereby regulating protein translation termination efficiency. The protein is Prolyl 3,4-dihydroxylase OGFOD1 (Ogd) of Ostreococcus tauri.